The chain runs to 228 residues: DNA mismatch repair protein MutH (228 aa).

The protein belongs to the MutH family.

The protein localises to the cytoplasm. Functionally, sequence-specific endonuclease that cleaves unmethylated GATC sequences. It is involved in DNA mismatch repair. In Yersinia enterocolitica serotype O:8 / biotype 1B (strain NCTC 13174 / 8081), this protein is DNA mismatch repair protein MutH.